Consider the following 590-residue polypeptide: Ras-specific guanine nucleotide-releasing factor RalGPS2 (590 aa).

One can recognise a Ras-GEF domain in the interval 49–287; that stretch reads TPEEYAGQIT…YKLSLKIEPG (239 aa). The segment at 288-319 is disordered; the sequence is ASTPRSAASREDLAGPDIGASPQGGRKSSAAA. Ser-293, Ser-296, and Ser-308 each carry phosphoserine. Positions 331 to 334 match the PXXP motif; the sequence is PQTP. Residue Thr-333 is modified to Phosphothreonine. Phosphoserine is present on residues Ser-336 and Ser-350. Phosphothreonine is present on Thr-368. A disordered region spans residues 380–413; sequence DSVMEPHAPSRGQAESSTLSSGISIGSSDGSELS. At Ser-381 the chain carries Phosphoserine. Positions 394 to 410 are enriched in low complexity; that stretch reads ESSTLSSGISIGSSDGS. Ser-429 is subject to Phosphoserine. In terms of domain architecture, PH spans 464-576; sequence AVTIQGVLRR…WFKHLSAACQ (113 aa). The interval 466 to 590 is required for stimulation of nucleotide exchange by RALA; sequence TIQGVLRRKT…QVPTNLMTFE (125 aa).

As to quaternary structure, interacts with RALA. Interacts with the SH3 domains of GRB2 and PLCG1. Abundant in brain and testis.

The protein resides in the cytoplasm. The protein localises to the cell membrane. Functionally, guanine nucleotide exchange factor for the small GTPase RALA. May be involved in cytoskeletal organization. May also be involved in the stimulation of transcription in a Ras-independent fashion. The sequence is that of Ras-specific guanine nucleotide-releasing factor RalGPS2 (Ralgps2) from Mus musculus (Mouse).